The following is a 957-amino-acid chain: Atromentin synthetase (957 aa).

Positions serine 59 to valine 464 are adenylation (A) domain. The Carrier domain occupies threonine 596–valine 674. The tract at residues aspartate 601 to asparagine 671 is thiolation and peptide carrier (T) domain. O-(pantetheine 4'-phosphoryl)serine is present on serine 633. A thioesterase (TE) domain region spans residues proline 697–isoleucine 947.

It belongs to the ATP-dependent AMP-binding enzyme family.

It participates in secondary metabolite biosynthesis. Functionally, the L-tyrosine:2-oxoglutarate aminotransferase atrD and the atromentin synthetase atrA catalyze consecutive steps to turn over L-tyrosine into atromentin, which represents the generic precursor molecule for the entire terphenylquinone and pulvinic acid family of pigments, which are widely distributed secondary metabolites in homobasidiomycetes. The first step is catalyzed by atrD which converts L-tyrosine in to 4-hydroxyphenylpyruvate (4-HPP). Adenylation of two 4-HPP monomers by the atrA adenylation (A) domain, ester bond formation between monomers and atrA, and symmetric C-C-bond formation between two monomers by atrA leads to atromentin. This is Atromentin synthetase from Tapinella panuoides (Oyster rollrim mushroom).